The chain runs to 97 residues: Co-chaperonin GroES (97 aa).

The protein belongs to the GroES chaperonin family. Heptamer of 7 subunits arranged in a ring. Interacts with the chaperonin GroEL.

The protein resides in the cytoplasm. In terms of biological role, together with the chaperonin GroEL, plays an essential role in assisting protein folding. The GroEL-GroES system forms a nano-cage that allows encapsulation of the non-native substrate proteins and provides a physical environment optimized to promote and accelerate protein folding. GroES binds to the apical surface of the GroEL ring, thereby capping the opening of the GroEL channel. The protein is Co-chaperonin GroES of Pseudomonas putida (strain ATCC 700007 / DSM 6899 / JCM 31910 / BCRC 17059 / LMG 24140 / F1).